The primary structure comprises 105 residues: Early E3A 12.1 kDa protein (105 aa).

This sequence belongs to the adenoviridae E3A-2 family.

Functionally, not yet known. The sequence is that of Early E3A 12.1 kDa protein from Human adenovirus A serotype 12 (HAdV-12).